We begin with the raw amino-acid sequence, 353 residues long: Anthranilate phosphoribosyltransferase (353 aa).

5-phospho-alpha-D-ribose 1-diphosphate contacts are provided by residues Gly-87, 90–91 (GD), Thr-95, 97–100 (NIST), 115–123 (KHGNRAASS), and Thr-127. Gly-87 is a binding site for anthranilate. A Mg(2+)-binding site is contributed by Ser-99. An anthranilate-binding site is contributed by Asn-118. Arg-173 lines the anthranilate pocket. Residues Asp-231 and Glu-232 each contribute to the Mg(2+) site.

The protein belongs to the anthranilate phosphoribosyltransferase family. Homodimer. It depends on Mg(2+) as a cofactor.

It catalyses the reaction N-(5-phospho-beta-D-ribosyl)anthranilate + diphosphate = 5-phospho-alpha-D-ribose 1-diphosphate + anthranilate. Its pathway is amino-acid biosynthesis; L-tryptophan biosynthesis; L-tryptophan from chorismate: step 2/5. Catalyzes the transfer of the phosphoribosyl group of 5-phosphorylribose-1-pyrophosphate (PRPP) to anthranilate to yield N-(5'-phosphoribosyl)-anthranilate (PRA). The polypeptide is Anthranilate phosphoribosyltransferase (Salinispora arenicola (strain CNS-205)).